Reading from the N-terminus, the 49-residue chain is Small, acid-soluble spore protein O (49 aa).

A disordered region spans residues 1–49 (MVKRKANHVIPGMNDASAQGKGAGYNEELSNEPLTEAQKQNNKKRKKNQ).

Belongs to the SspO family.

The protein resides in the spore core. In Anoxybacillus flavithermus (strain DSM 21510 / WK1), this protein is Small, acid-soluble spore protein O.